The sequence spans 255 residues: MARMGGRRHLKTLAAPKFWPVRQRAGIFTVKPSPGPHPIERSIPLLILVRDVLGYAKTAREARKLIAEGHFKIDGRVRRNYKYPVGFMDVIEIVDTGEFYRVLPYPTRFFTLHPISKEEAQFKLGRIEDKSTVKGGHIQLHLHDGRNVLIRVSDPTNPVEAKPYKTLGTVKISIPEQQLLGYAPLEVGSLVIIFGGRNVGRVGRIVSIQPGMRRRGIVTIEDARGEKIQTSLEYVFVIAPPNEEPWISLPEGAWK.

An S4 RNA-binding domain is found at 43 to 115 (IPLLILVRDV…PTRFFTLHPI (73 aa)).

This sequence belongs to the eukaryotic ribosomal protein eS4 family.

The polypeptide is Small ribosomal subunit protein eS4 (Hyperthermus butylicus (strain DSM 5456 / JCM 9403 / PLM1-5)).